We begin with the raw amino-acid sequence, 595 residues long: Beta-(1--&gt;2)glucan export ATP-binding/permease protein NdvA (595 aa).

The region spanning 21–301 (SLLICAANVM…MSNFINLTVS (281 aa)) is the ABC transmembrane type-1 domain. A run of 5 helical transmembrane segments spans residues 22 to 42 (LLICAANVMLAIITIAEPILF), 55 to 75 (IILTLTIWVCFGISHIIAYVL), 128 to 148 (AIWLDFMRQHLSTLVALFILI), 152 to 172 (FNMNWRLSIVLVVLAIIYVLI), and 248 to 268 (TASTISIVCVLLLGAFFVAKG). The region spanning 335 to 569 (VQFHHVTYKF…GGRFYKLLKA (235 aa)) is the ABC transporter domain. 368–375 (GPTGAGKT) serves as a coordination point for ATP.

This sequence belongs to the ABC transporter superfamily. Beta-(1--&gt;2)glucan exporter (TC 3.A.1.108.1) family. In terms of assembly, homodimer.

The protein localises to the cell inner membrane. It carries out the reaction [(1-&gt;2)-beta-D-glucosyl](n)(in) + ATP + H2O = [(1-&gt;2)-beta-D-glucosyl](n)(out) + ADP + phosphate + H(+). Involved in beta-(1--&gt;2)glucan export. Transmembrane domains (TMD) form a pore in the inner membrane and the ATP-binding domain (NBD) is responsible for energy generation. This Bartonella quintana (strain Toulouse) (Rochalimaea quintana) protein is Beta-(1--&gt;2)glucan export ATP-binding/permease protein NdvA.